The following is a 1217-amino-acid chain: DNA-directed RNA polymerase subunit beta' (1217 aa).

Residues Cys60, Cys62, Cys75, and Cys78 each contribute to the Zn(2+) site. Residues Asp449, Asp451, and Asp453 each contribute to the Mg(2+) site. Cys821, Cys895, Cys902, and Cys905 together coordinate Zn(2+).

It belongs to the RNA polymerase beta' chain family. The RNAP catalytic core consists of 2 alpha, 1 beta, 1 beta' and 1 omega subunit. When a sigma factor is associated with the core the holoenzyme is formed, which can initiate transcription. Mg(2+) is required as a cofactor. The cofactor is Zn(2+).

The catalysed reaction is RNA(n) + a ribonucleoside 5'-triphosphate = RNA(n+1) + diphosphate. Functionally, DNA-dependent RNA polymerase catalyzes the transcription of DNA into RNA using the four ribonucleoside triphosphates as substrates. In Lactobacillus helveticus (strain DPC 4571), this protein is DNA-directed RNA polymerase subunit beta'.